The sequence spans 426 residues: Protein EARLY STARVATION 1, chloroplastic (426 aa).

Residues 1–58 (MSEMAASSAISLLDIKLRRFGVGASNHELRLTKWFKGDQAGAPTRRFTCFADMLAPIR) constitute a chloroplast transit peptide. Disordered stretches follow at residues 106-127 (CTPR…TGIA) and 396-426 (QPRE…DQPQ). A compositionally biased stretch (basic and acidic residues) spans 118 to 127 (TPPKRDTGIA). Pro residues predominate over residues 412 to 426 (PSPPPEPDLPPDQPQ).

The protein belongs to the ESV1 family.

The protein resides in the plastid. It localises to the chloroplast stroma. The protein localises to the plastid stroma. Its function is as follows. Binds preferentially to highly ordered alpha-glucans, such as starch and crystalline maltodextrins. Involved in the organization of the starch granule matrix, thus influencing starch turnover by modulating the accessibility of starch polymers to modifying and degrading enzymes involved in phosphorylation, hydrolyzes and synthesis, including starch synthases (SSI and SSIII), starch phosphorylases (PHS1), isoamylase, beta-amylase, glucan water dikinase (GWD) and phosphoglucan water dikinase (PWD). Prevents GWD- and PWD-mediated starch phosphorylation, and subsequent degradation. Required for the control of starch degradation in leaves and starch distribution in nonphotosynthetic parts (e.g. cells immediately adjacent to veins, columella cells of root caps, stems, flowers and siliques) by limiting the hasty depletion of starch reserves during the night. Promotes gravitropic responses, negative in shoots but positive in roots, by maintaining starch granules (statoliths) accumulation in hypocotyls and roots columella, especially in dark conditions and in the endodermis, where starch is formed from transported glucose-6-phosphates. This Arabidopsis thaliana (Mouse-ear cress) protein is Protein EARLY STARVATION 1, chloroplastic.